A 372-amino-acid polypeptide reads, in one-letter code: Queuine tRNA-ribosyltransferase (372 aa).

Residue D89 is the Proton acceptor of the active site. Substrate-binding positions include 89–93, D161, and G232; that span reads DSGGF. Residues 262–268 form an RNA binding region; it reads GIGDLPS. D281 functions as the Nucleophile in the catalytic mechanism. Positions 286–290 are RNA binding; important for wobble base 34 recognition; it reads TKAAR. Zn(2+)-binding residues include C319, C321, C324, and H351.

Belongs to the queuine tRNA-ribosyltransferase family. Homodimer. Within each dimer, one monomer is responsible for RNA recognition and catalysis, while the other monomer binds to the replacement base PreQ1. It depends on Zn(2+) as a cofactor.

It carries out the reaction 7-aminomethyl-7-carbaguanine + guanosine(34) in tRNA = 7-aminomethyl-7-carbaguanosine(34) in tRNA + guanine. It functions in the pathway tRNA modification; tRNA-queuosine biosynthesis. Its function is as follows. Catalyzes the base-exchange of a guanine (G) residue with the queuine precursor 7-aminomethyl-7-deazaguanine (PreQ1) at position 34 (anticodon wobble position) in tRNAs with GU(N) anticodons (tRNA-Asp, -Asn, -His and -Tyr). Catalysis occurs through a double-displacement mechanism. The nucleophile active site attacks the C1' of nucleotide 34 to detach the guanine base from the RNA, forming a covalent enzyme-RNA intermediate. The proton acceptor active site deprotonates the incoming PreQ1, allowing a nucleophilic attack on the C1' of the ribose to form the product. After dissociation, two additional enzymatic reactions on the tRNA convert PreQ1 to queuine (Q), resulting in the hypermodified nucleoside queuosine (7-(((4,5-cis-dihydroxy-2-cyclopenten-1-yl)amino)methyl)-7-deazaguanosine). The chain is Queuine tRNA-ribosyltransferase from Chlamydia caviae (strain ATCC VR-813 / DSM 19441 / 03DC25 / GPIC) (Chlamydophila caviae).